The following is a 106-amino-acid chain: Small ribosomal subunit protein uS10 (106 aa).

This sequence belongs to the universal ribosomal protein uS10 family. In terms of assembly, part of the 30S ribosomal subunit.

In terms of biological role, involved in the binding of tRNA to the ribosomes. This chain is Small ribosomal subunit protein uS10, found in Mycoplasma genitalium (strain ATCC 33530 / DSM 19775 / NCTC 10195 / G37) (Mycoplasmoides genitalium).